The chain runs to 58 residues: Small ribosomal subunit protein bS21 (58 aa).

Positions 36–58 (EHYEKPSVKRKKKSEAARRRKYR) are disordered. The span at 43–58 (VKRKKKSEAARRRKYR) shows a compositional bias: basic residues.

It belongs to the bacterial ribosomal protein bS21 family.

This chain is Small ribosomal subunit protein bS21, found in Symbiobacterium thermophilum (strain DSM 24528 / JCM 14929 / IAM 14863 / T).